Consider the following 301-residue polypeptide: UDP-N-acetylenolpyruvoylglucosamine reductase (301 aa).

Residues 30-194 (VGGEADYLVF…LSVKFALAPG (165 aa)) form the FAD-binding PCMH-type domain. The active site involves R173. S223 functions as the Proton donor in the catalytic mechanism. E293 is a catalytic residue.

It belongs to the MurB family. It depends on FAD as a cofactor.

It is found in the cytoplasm. The catalysed reaction is UDP-N-acetyl-alpha-D-muramate + NADP(+) = UDP-N-acetyl-3-O-(1-carboxyvinyl)-alpha-D-glucosamine + NADPH + H(+). The protein operates within cell wall biogenesis; peptidoglycan biosynthesis. Cell wall formation. This is UDP-N-acetylenolpyruvoylglucosamine reductase from Streptococcus pneumoniae (strain Hungary19A-6).